The primary structure comprises 185 residues: Crossover junction endodeoxyribonuclease RuvC (185 aa).

Residues D7, E66, and D137 contribute to the active site. D7, E66, and D137 together coordinate Mg(2+).

This sequence belongs to the RuvC family. In terms of assembly, homodimer which binds Holliday junction (HJ) DNA. The HJ becomes 2-fold symmetrical on binding to RuvC with unstacked arms; it has a different conformation from HJ DNA in complex with RuvA. In the full resolvosome a probable DNA-RuvA(4)-RuvB(12)-RuvC(2) complex forms which resolves the HJ. Mg(2+) serves as cofactor.

It is found in the cytoplasm. It catalyses the reaction Endonucleolytic cleavage at a junction such as a reciprocal single-stranded crossover between two homologous DNA duplexes (Holliday junction).. The RuvA-RuvB-RuvC complex processes Holliday junction (HJ) DNA during genetic recombination and DNA repair. Endonuclease that resolves HJ intermediates. Cleaves cruciform DNA by making single-stranded nicks across the HJ at symmetrical positions within the homologous arms, yielding a 5'-phosphate and a 3'-hydroxyl group; requires a central core of homology in the junction. The consensus cleavage sequence is 5'-(A/T)TT(C/G)-3'. Cleavage occurs on the 3'-side of the TT dinucleotide at the point of strand exchange. HJ branch migration catalyzed by RuvA-RuvB allows RuvC to scan DNA until it finds its consensus sequence, where it cleaves and resolves the cruciform DNA. The polypeptide is Crossover junction endodeoxyribonuclease RuvC (Anaeromyxobacter sp. (strain K)).